We begin with the raw amino-acid sequence, 340 residues long: Protein SSUH2 homolog (340 aa).

Over residues 1-11 (MDRDPSEEDSM) the composition is skewed to acidic residues. A disordered region spans residues 1–20 (MDRDPSEEDSMADLSFEAES).

In terms of tissue distribution, widely expressed, with highest levels in the liver, intestine, tongue and underjaw.

Its subcellular location is the cytoplasm. The protein resides in the nucleus. In terms of biological role, plays a role in odontogenesis. The protein is Protein SSUH2 homolog of Mus musculus (Mouse).